The sequence spans 677 residues: Methionine--tRNA ligase (677 aa).

Residues 15–25 carry the 'HIGH' region motif; sequence PYANGSIHLGH. Residues cysteine 146, cysteine 149, cysteine 159, and cysteine 162 each contribute to the Zn(2+) site. Positions 333-337 match the 'KMSKS' region motif; sequence KMSKS. Lysine 336 contacts ATP. Positions 575 to 677 constitute a tRNA-binding domain; it reads DFAKVDLRVA…AGAKPGHQVK (103 aa).

The protein belongs to the class-I aminoacyl-tRNA synthetase family. MetG type 1 subfamily. As to quaternary structure, homodimer. Zn(2+) is required as a cofactor.

It is found in the cytoplasm. It catalyses the reaction tRNA(Met) + L-methionine + ATP = L-methionyl-tRNA(Met) + AMP + diphosphate. In terms of biological role, is required not only for elongation of protein synthesis but also for the initiation of all mRNA translation through initiator tRNA(fMet) aminoacylation. This chain is Methionine--tRNA ligase, found in Escherichia coli O6:K15:H31 (strain 536 / UPEC).